Reading from the N-terminus, the 130-residue chain is Small ribosomal subunit protein uS11 (130 aa).

This sequence belongs to the universal ribosomal protein uS11 family. In terms of assembly, part of the 30S ribosomal subunit. Interacts with proteins S7 and S18. Binds to IF-3.

Functionally, located on the platform of the 30S subunit, it bridges several disparate RNA helices of the 16S rRNA. Forms part of the Shine-Dalgarno cleft in the 70S ribosome. This is Small ribosomal subunit protein uS11 from Campylobacter fetus subsp. fetus (strain 82-40).